Reading from the N-terminus, the 683-residue chain is uncharacterized protein (683 aa).

2 stretches are compositionally biased toward polar residues: residues 407–420 (FETS…TYTP) and 512–529 (EGSS…SSEA). Disordered regions lie at residues 407–427 (FETS…KLST), 509–556 (FSRE…SSTV), and 621–648 (HNTS…DHPD). Low complexity predominate over residues 531-542 (LPPLLTTTPTPT). Composition is skewed to polar residues over residues 543–556 (NTEK…SSTV) and 621–630 (HNTSMPNPHH). Residues 633 to 648 (VKPEDHPHHPEGDHPD) show a composition bias toward basic and acidic residues. The chain crosses the membrane as a helical span at residues 657–677 (IWLLPIAGTIFALVALVIVNI).

Its subcellular location is the host membrane. This is an uncharacterized protein from Alcelaphine herpesvirus 1 (strain C500) (AlHV-1).